Here is a 238-residue protein sequence, read N- to C-terminus: Monocyte to macrophage differentiation factor (238 aa).

The Cytoplasmic segment spans residues 1 to 28 (MRFKNRFQRFMNHRAPANGRYKPTCYEH). The chain crosses the membrane as a helical span at residues 29-49 (AANCYTHAFLIVPAIVGSALL). Over 50–61 (HRLSDDCWEKIT) the chain is Lumenal. The chain crosses the membrane as a helical span at residues 62–82 (AWIYGMGLCALFIVSTVFHIV). Topologically, residues 83 to 101 (SWKKSHLRTVEHCFHMCDR) are cytoplasmic. Residues 102-122 (MVIYFFIAASYAPWLNLRELG) traverse the membrane as a helical segment. Residues 123 to 124 (PL) lie on the Lumenal side of the membrane. The chain crosses the membrane as a helical span at residues 125-145 (ASHMRWFIWLMAAGGTIYVFL). Topologically, residues 146 to 151 (YHEKYK) are cytoplasmic. A helical transmembrane segment spans residues 152–172 (VVELFFYLTMGFSPALVVTSM). The Lumenal portion of the chain corresponds to 173–174 (NN). Residues 175–195 (TDGLQELACGGLIYCLGVVFF) form a helical membrane-spanning segment. Topologically, residues 196–198 (KSD) are cytoplasmic. The helical transmembrane segment at 199–219 (GIIPFAHAIWHLFVATAAAVH) threads the bilayer. Topologically, residues 220 to 238 (YYAIWKYLYRSPTDFMRHL) are lumenal.

It belongs to the ADIPOR family. As to expression, exhibits relatively ubiquitous expression with preferential expression in mature (in vitro differentiated) macrophages.

It localises to the late endosome membrane. The protein localises to the lysosome membrane. In terms of biological role, involved in the dynamics of lysosomal membranes associated with microglial activation following brain lesion. This is Monocyte to macrophage differentiation factor from Homo sapiens (Human).